We begin with the raw amino-acid sequence, 1221 residues long: Probable serine/threonine-protein kinase DDB_G0286465 (1221 aa).

3 disordered regions span residues 1-37, 104-133, and 173-263; these read MTLRLDTSLKRGASRNIPPIPTFSSVSNENLSSSPYT, FSPSTGRTKNNNNNNNNNINNNNYKKNDNQ, and ENNS…NNNE. Composition is skewed to low complexity over residues 24–37, 112–127, 173–192, and 204–263; these read SSVSNENLSSSPYT, KNNNNNNNNNINNNNY, ENNSQNNNNNKYQINNNMQK, and NNNN…NNNE. Positions 186–627 constitute a Protein kinase domain; the sequence is INNNMQKTGG…PYKLLDHPFF (442 aa). Residue 192–200 coordinates ATP; sequence KTGGRNGSV. Residue Lys-271 coordinates ATP. Positions 324–344 are enriched in low complexity; it reads NVNNNNSNNNNNNSNNNITNS. The segment at 324 to 346 is disordered; sequence NVNNNNSNNNNNNSNNNITNSRY. Asp-448 (proton acceptor) is an active-site residue. Low complexity-rich tracts occupy residues 538–550 and 559–584; these read SPSSSSTTSTSTS and DSSSSASSSSSSSSSSSSSSSSSLPK. Disordered stretches follow at residues 538–604, 712–782, 823–858, 959–1008, and 1105–1152; these read SPSS…PEKR, PNLS…KEKL, KFEKKQRQIQDSEKVNKNEEENQTKDDADNISPPLP, KENI…SYCN, and KKQE…QQEK. A compositionally biased stretch (basic and acidic residues) spans 591–604; that stretch reads RSKDNQSKLDPEKR. Residues 725–738 are compositionally biased toward low complexity; sequence KKQLQQYQQQQKQQ. The segment covering 746-756 has biased composition (acidic residues); the sequence is DDEEEKEEEEK. Composition is skewed to basic and acidic residues over residues 757 to 769 and 823 to 850; these read EKEKEKEKEKEKE and KFEKKQRQIQDSEKVNKNEEENQTKDDA. Low complexity predominate over residues 959–993; it reads KENIINFHNNNNNNNNNNNNNNNNNNNNNNNNNNN.

It belongs to the protein kinase superfamily. Ser/Thr protein kinase family.

The catalysed reaction is L-seryl-[protein] + ATP = O-phospho-L-seryl-[protein] + ADP + H(+). It carries out the reaction L-threonyl-[protein] + ATP = O-phospho-L-threonyl-[protein] + ADP + H(+). This Dictyostelium discoideum (Social amoeba) protein is Probable serine/threonine-protein kinase DDB_G0286465.